A 526-amino-acid chain; its full sequence is Delayed-rectifier potassium channel regulatory subunit KCNS1 (526 aa).

Residues 1–217 (MLMLLVRGTH…LTMENPGYSL (217 aa)) are Cytoplasmic-facing. The helical transmembrane segment at 218–239 (PSKLFSCVSISVVLASIAAMCI) threads the bilayer. At 240-270 (HSLPEYQAREAAAAVAAVAAGRSPEGVRDDP) the chain is on the extracellular side. The helical transmembrane segment at 271-293 (VLRRLEYFCIAWFSFEVSSRLLL) threads the bilayer. Topologically, residues 294 to 304 (APSTRNFFCHP) are cytoplasmic. The chain crosses the membrane as a helical span at residues 305–322 (LNLIDIVSVLPFYLTLLA). Residues 323-337 (GVALGDQGGKEFGHL) are Extracellular-facing. Residues 338-358 (GKVVQVFRLMRIFRVLKLARH) traverse the membrane as a helical; Voltage-sensor segment. Topologically, residues 359–373 (STGLRSLGATLKHSY) are cytoplasmic. The helical transmembrane segment at 374–395 (REVGILLLYLAVGVSVFSGVAY) threads the bilayer. The Extracellular portion of the chain corresponds to 396–408 (TAEKEEDVGFNTI). The segment at residues 409-420 (PACWWWGTVSMT) is an intramembrane region (helical). A Selectivity filter motif is present at residues 421–426 (TVGYGD). Residues 421–428 (TVGYGDVV) lie within the membrane without spanning it. The Extracellular segment spans residues 429 to 435 (PVTVAGK). A helical transmembrane segment spans residues 436 to 464 (LAASGCILGGILVVALPITIIFNKFSHFY). Topologically, residues 465-526 (RRQKALEAAV…PSEPPHPQRY (62 aa)) are cytoplasmic. Residues 492 to 526 (VSEASLETSGETSQEGRSADLESQAPSEPPHPQRY) form a disordered region. A compositionally biased stretch (polar residues) spans 496–507 (SLETSGETSQEG).

This sequence belongs to the potassium channel family. S (TC 1.A.1.2) subfamily. Kv9.1/KCNS1 sub-subfamily. As to quaternary structure, heterotetramer with KCNB1. Heterotetramer with KCNB2. Does not form homomultimers.

The protein resides in the cell membrane. Its function is as follows. Potassium channel regulatory subunit that modulate the delayed rectifier voltage-gated potassium channel activity of KCNB1 and KCNB2 by altering their kinetics, expression levels, and shifting the half-inactivation potential to more polarized values. While it does not form functional channels on its own, it can form functional heterotetrameric channels with KCNB1 and KCNB2. Each regulatory subunit has unique regulatory properties that can lead to extensive inhibition, significant changes in kinetics, and/or substantial shifts in the voltage dependencies of the inactivation process. The chain is Delayed-rectifier potassium channel regulatory subunit KCNS1 from Gorilla gorilla gorilla (Western lowland gorilla).